A 561-amino-acid chain; its full sequence is Putative ABC transporter ATP-binding protein SAV_5847 (561 aa).

Positions 2-243 constitute an ABC transporter 1 domain; sequence IRFEDVSVTY…SPVYPPVVDL (242 aa). Position 36–43 (36–43) interacts with ATP; sequence GPSGVGKS. The interval 268–299 is disordered; sequence ERLAATETPTPTATATATAAPAPSPSRPRRPR. Residues 272–288 show a composition bias toward low complexity; sequence ATETPTPTATATATAAP. An ABC transporter 2 domain is found at 315–543; sequence AAVEALAVRR…SPSFAPQVTK (229 aa). 347–354 provides a ligand contact to ATP; that stretch reads GRNGAGKS.

Belongs to the ABC transporter superfamily.

It is found in the cell membrane. Functionally, probably part of an ABC transporter complex. Responsible for energy coupling to the transport system. This chain is Putative ABC transporter ATP-binding protein SAV_5847, found in Streptomyces avermitilis (strain ATCC 31267 / DSM 46492 / JCM 5070 / NBRC 14893 / NCIMB 12804 / NRRL 8165 / MA-4680).